The primary structure comprises 83 residues: MKTGIHPDYAPVVFRDLASGATFLTRSTVSSQKTIEWEDGSTYPVIDVEISSESHPFYTGKQRILDSAGRVEKFNTRYKNFGK.

This sequence belongs to the bacterial ribosomal protein bL31 family. Type B subfamily. As to quaternary structure, part of the 50S ribosomal subunit.

In Leifsonia xyli subsp. xyli (strain CTCB07), this protein is Large ribosomal subunit protein bL31B.